The primary structure comprises 434 residues: Glutamate-1-semialdehyde 2,1-aminomutase (434 aa).

Lys-266 carries the N6-(pyridoxal phosphate)lysine modification.

Belongs to the class-III pyridoxal-phosphate-dependent aminotransferase family. HemL subfamily. As to quaternary structure, homodimer. Pyridoxal 5'-phosphate is required as a cofactor.

The protein resides in the cytoplasm. It carries out the reaction (S)-4-amino-5-oxopentanoate = 5-aminolevulinate. The protein operates within porphyrin-containing compound metabolism; protoporphyrin-IX biosynthesis; 5-aminolevulinate from L-glutamyl-tRNA(Glu): step 2/2. This chain is Glutamate-1-semialdehyde 2,1-aminomutase, found in Psychrobacter sp. (strain PRwf-1).